The sequence spans 872 residues: Valine--tRNA ligase (872 aa).

A 'HIGH' region motif is present at residues 45 to 55; that stretch reads PYPTGNLHIGN. The short motif at 524–528 is the 'KMSKS' region element; sequence KMSKS. An ATP-binding site is contributed by K527.

The protein belongs to the class-I aminoacyl-tRNA synthetase family. ValS type 2 subfamily.

The protein resides in the cytoplasm. The enzyme catalyses tRNA(Val) + L-valine + ATP = L-valyl-tRNA(Val) + AMP + diphosphate. Its function is as follows. Catalyzes the attachment of valine to tRNA(Val). As ValRS can inadvertently accommodate and process structurally similar amino acids such as threonine, to avoid such errors, it has a 'posttransfer' editing activity that hydrolyzes mischarged Thr-tRNA(Val) in a tRNA-dependent manner. In Natronomonas pharaonis (strain ATCC 35678 / DSM 2160 / CIP 103997 / JCM 8858 / NBRC 14720 / NCIMB 2260 / Gabara) (Halobacterium pharaonis), this protein is Valine--tRNA ligase.